The primary structure comprises 365 residues: NADH-quinone oxidoreductase subunit H 2 (365 aa).

Transmembrane regions (helical) follow at residues 1–21 (MFVV…VVWA), 71–91 (LAPV…PFAP), 100–120 (VGVF…FLAG), 136–156 (IAQV…VVLI), 199–219 (FVSW…VFFI), 254–274 (ILFL…VVLF), 301–321 (IAGY…VVFL), and 342–362 (WKIL…WVVW).

It belongs to the complex I subunit 1 family. NDH-1 is composed of 14 different subunits. Subunits NuoA, H, J, K, L, M, N constitute the membrane sector of the complex.

Its subcellular location is the cell inner membrane. It catalyses the reaction a quinone + NADH + 5 H(+)(in) = a quinol + NAD(+) + 4 H(+)(out). Functionally, NDH-1 shuttles electrons from NADH, via FMN and iron-sulfur (Fe-S) centers, to quinones in the respiratory chain. The immediate electron acceptor for the enzyme in this species is believed to be ubiquinone. Couples the redox reaction to proton translocation (for every two electrons transferred, four hydrogen ions are translocated across the cytoplasmic membrane), and thus conserves the redox energy in a proton gradient. This subunit may bind ubiquinone. The sequence is that of NADH-quinone oxidoreductase subunit H 2 from Cytophaga hutchinsonii (strain ATCC 33406 / DSM 1761 / CIP 103989 / NBRC 15051 / NCIMB 9469 / D465).